Consider the following 903-residue polypeptide: Dual 3',5'-cyclic-AMP and -GMP phosphodiesterase 11A (903 aa).

2 GAF domains span residues aspartate 175–isoleucine 324 and aspartate 356–isoleucine 512. Serine 378 is a binding site for 3',5'-cyclic GMP. Residues serine 542–arginine 866 form the PDEase domain. Catalysis depends on histidine 618, which acts as the Proton donor. Histidine 622, histidine 658, aspartate 659, and aspartate 770 together coordinate a divalent metal cation. The tract at residues aspartate 863 to serine 903 is disordered. Residues cysteine 893 to serine 903 show a composition bias toward polar residues.

It belongs to the cyclic nucleotide phosphodiesterase family. Requires a divalent metal cation as cofactor.

The protein localises to the cytoplasm. It localises to the cytosol. It carries out the reaction 3',5'-cyclic GMP + H2O = GMP + H(+). The catalysed reaction is 3',5'-cyclic AMP + H2O = AMP + H(+). Functionally, plays a role in signal transduction by regulating the intracellular concentration of cyclic nucleotides cAMP and cGMP. Catalyzes the hydrolysis of both cAMP and cGMP to 5'-AMP and 5'-GMP, respectively. This Takifugu rubripes (Japanese pufferfish) protein is Dual 3',5'-cyclic-AMP and -GMP phosphodiesterase 11A (pde11a).